The following is a 415-amino-acid chain: Probable G-protein coupled receptor 19 (415 aa).

At 1 to 69 (MVFAHRMDNS…LKPGEVATAS (69 aa)) the chain is on the extracellular side. Asn-25 and Asn-52 each carry an N-linked (GlcNAc...) asparagine glycan. A helical membrane pass occupies residues 70 to 90 (IFFGILWLFSIFGNSLVCLVI). Topologically, residues 91–102 (HRSRRTQSTTNY) are cytoplasmic. A helical membrane pass occupies residues 103–123 (FVVSMACADLLISVASTPFVL). Over 124-143 (LQFTTGRWTLGSATCKVVRY) the chain is Extracellular. The cysteines at positions 138 and 210 are disulfide-linked. Residues 144-161 (FQYLTPGVQIYVLLSICI) traverse the membrane as a helical segment. Residues 162-182 (DRFYTIVYPLSFKVSREKAKK) lie on the Cytoplasmic side of the membrane. Residues 183-203 (MIAASWVFDAGFVTPVLFFYG) traverse the membrane as a helical segment. At 204–221 (SNWDSHCNYFLPSSWEGT) the chain is on the extracellular side. Residues 222–242 (AYTVIHFLVGFVIPSVLIILF) form a helical membrane-spanning segment. At 243–277 (YQKVIKYIWRIGTDGRTVRRTMNIVPRTKVKTIKM) the chain is on the cytoplasmic side. Residues 278–298 (FLILNLLFLLSWLPFHVAQLW) form a helical membrane-spanning segment. Topologically, residues 299 to 309 (HPHEQDYKKSS) are extracellular. A helical transmembrane segment spans residues 310 to 325 (LVFTAITWISFSSSAS). Residues 326–415 (KPTLYSIYNA…INSNPPNTFV (90 aa)) lie on the Cytoplasmic side of the membrane.

It belongs to the G-protein coupled receptor 1 family. In terms of tissue distribution, abundant expression in the brain.

It is found in the cell membrane. G-protein coupled receptor that plays a role in the regulation of circadian rhythms and energy metabolism. Participates in maintaining proper circadian gene expression in the suprachiasmatic nucleus (SCN), the locus of the master circadian clock in the brain. May function as a coordinator of aging-associated metabolic dysfunction, stress response, DNA integrity management, and eventual senescence. Upon binding to adropin, modulates mitochondrial energy metabolism via the p44/42-PDK4 signaling pathway, influencing pyruvate dehydrogenase activity. The sequence is that of Probable G-protein coupled receptor 19 (GPR19) from Homo sapiens (Human).